The sequence spans 161 residues: Small ribosomal subunit protein bS6 (161 aa).

The segment at 107-161 (KGDERERGFRGPKPAGRFESGRGGAGGARRGYDDREEFRARNEREDGRDTDGEAE) is disordered. Basic and acidic residues predominate over residues 136 to 161 (RGYDDREEFRARNEREDGRDTDGEAE).

It belongs to the bacterial ribosomal protein bS6 family.

Functionally, binds together with bS18 to 16S ribosomal RNA. The polypeptide is Small ribosomal subunit protein bS6 (Gluconacetobacter diazotrophicus (strain ATCC 49037 / DSM 5601 / CCUG 37298 / CIP 103539 / LMG 7603 / PAl5)).